Here is a 250-residue protein sequence, read N- to C-terminus: MSVTMREMLEAGVHFGHQTRFWNPKMAPFIFGHRNKIHIINLEKSLPMFQEAQKFAKQLAANRGTILMVGTKRQARELVAEQAQRAGVPYVDQRWLGGMLTNFKTVKTSIKRLKDMKAQQEAGLESMSKKEQLMFSRELEKLEKDIGGIQDMAALPDAIFVIDVGYHKIAVSEAKKLGIPLIGVVDSNHSPEGIDYVIPGNDDSAKAVALYARGIADAILDGRANAVTEVAKAVAAEGSDEFVEVDENAA.

It belongs to the universal ribosomal protein uS2 family.

The chain is Small ribosomal subunit protein uS2 from Acidovorax ebreus (strain TPSY) (Diaphorobacter sp. (strain TPSY)).